We begin with the raw amino-acid sequence, 318 residues long: Aspartate carbamoyltransferase catalytic subunit (318 aa).

The carbamoyl phosphate site is built by arginine 59 and threonine 60. Lysine 87 is a binding site for L-aspartate. Positions 109, 137, and 140 each coordinate carbamoyl phosphate. L-aspartate contacts are provided by arginine 170 and arginine 224. Positions 265 and 266 each coordinate carbamoyl phosphate.

This sequence belongs to the aspartate/ornithine carbamoyltransferase superfamily. ATCase family. In terms of assembly, heterododecamer (2C3:3R2) of six catalytic PyrB chains organized as two trimers (C3), and six regulatory PyrI chains organized as three dimers (R2).

The enzyme catalyses carbamoyl phosphate + L-aspartate = N-carbamoyl-L-aspartate + phosphate + H(+). The protein operates within pyrimidine metabolism; UMP biosynthesis via de novo pathway; (S)-dihydroorotate from bicarbonate: step 2/3. Catalyzes the condensation of carbamoyl phosphate and aspartate to form carbamoyl aspartate and inorganic phosphate, the committed step in the de novo pyrimidine nucleotide biosynthesis pathway. This Allorhizobium ampelinum (strain ATCC BAA-846 / DSM 112012 / S4) (Agrobacterium vitis (strain S4)) protein is Aspartate carbamoyltransferase catalytic subunit.